Consider the following 308-residue polypeptide: F420-non-reducing hydrogenase subunit G (308 aa).

Belongs to the [NiFe]/[NiFeSe] hydrogenase small subunit family. As to quaternary structure, the F420-non-reducing hydrogenase is composed of three subunits; MvhA, MvhD and MvhG. It forms a complex with the heterodisulfide reductase (hdr).

Its function is as follows. Part of a complex that provides reducing equivalents for heterodisulfide reductase. The sequence is that of F420-non-reducing hydrogenase subunit G (mvhG) from Methanothermobacter thermautotrophicus (strain ATCC 29096 / DSM 1053 / JCM 10044 / NBRC 100330 / Delta H) (Methanobacterium thermoautotrophicum).